A 407-amino-acid chain; its full sequence is Peptide chain release factor subunit 1 (407 aa).

This sequence belongs to the eukaryotic release factor 1 family. In terms of assembly, heterodimer of two subunits, one of which binds GTP.

Its subcellular location is the cytoplasm. Its function is as follows. Directs the termination of nascent peptide synthesis (translation) in response to the termination codons UAA, UAG and UGA. In Archaeoglobus fulgidus (strain ATCC 49558 / DSM 4304 / JCM 9628 / NBRC 100126 / VC-16), this protein is Peptide chain release factor subunit 1 (prf1).